The sequence spans 360 residues: Diacylglycerol O-acyltransferase 3 (360 aa).

The segment at 153–182 (KAKAMKKMTEMDSESSSSSESSDSDCDKGK) is disordered. [2Fe-2S] cluster contacts are provided by cysteine 265, cysteine 270, cysteine 298, and cysteine 302.

The protein belongs to the diacylglycerol acyltransferase family. [2Fe-2S] cluster is required as a cofactor.

It catalyses the reaction an acyl-CoA + a 1,2-diacyl-sn-glycerol = a triacyl-sn-glycerol + CoA. The protein operates within glycerolipid metabolism; triacylglycerol biosynthesis. Functionally, involved in triacylglycerol (TAG) biosynthesis. Catalyzes the acylation of the sn-3 hydroxy group of sn-1,2-diacylglycerol using acyl-CoA. May preferentially use linolenoyl-CoA as substrate and to a lesser extent linoleoyl-CoA. May contribute to the active recycling of linoleate and linolenate into TAG when seed oil breakdown is blocked. The chain is Diacylglycerol O-acyltransferase 3 from Arabidopsis thaliana (Mouse-ear cress).